The sequence spans 89 residues: MAHKKAGGSSRNGRDTEGRRLGVKKFGGESVVAGNIIVRQRGTKVQAGPNVGVGRDHTLFALTDGHVKFLRRAEGRVQVAVTPLAIAAE.

Positions 1–21 (MAHKKAGGSSRNGRDTEGRRL) are disordered.

Belongs to the bacterial ribosomal protein bL27 family.

This is Large ribosomal subunit protein bL27 from Granulibacter bethesdensis (strain ATCC BAA-1260 / CGDNIH1).